A 441-amino-acid chain; its full sequence is Probable carboxypeptidase NFIA_052450 (441 aa).

The first 16 residues, 1-16, serve as a signal peptide directing secretion; that stretch reads MKPLSSLLLSAALSAA. N-linked (GlcNAc...) asparagine glycosylation is found at Asn88 and Asn150. Asp166 lines the Zn(2+) pocket. Catalysis depends on Glu198, which acts as the Proton acceptor. Position 199 (Glu199) interacts with Zn(2+). 2 N-linked (GlcNAc...) asparagine glycosylation sites follow: Asn354 and Asn373.

This sequence belongs to the peptidase M20A family. It depends on Zn(2+) as a cofactor.

The protein resides in the secreted. The sequence is that of Probable carboxypeptidase NFIA_052450 from Neosartorya fischeri (strain ATCC 1020 / DSM 3700 / CBS 544.65 / FGSC A1164 / JCM 1740 / NRRL 181 / WB 181) (Aspergillus fischerianus).